We begin with the raw amino-acid sequence, 72 residues long: Small proline-rich protein 2E (72 aa).

Low complexity predominate over residues 1–11 (MSYQQQQCKQP). Positions 1-20 (MSYQQQQCKQPCQPPPVCPT) are disordered. 3 tandem repeats follow at residues 21-29 (PKCPEPCPP), 30-38 (PKCPEPCPP), and 39-47 (PKCPQPCPP). A 3 X 9 AA tandem repeats of P-K-C-P-[EQ]-P-C-P-P region spans residues 21 to 47 (PKCPEPCPPPKCPEPCPPPKCPQPCPP). Positions 42 to 72 (PQPCPPQQCQQKCPPVTPSPPCQPKCPPKSK) are disordered. The segment covering 56–72 (PVTPSPPCQPKCPPKSK) has biased composition (pro residues).

It belongs to the cornifin (SPRR) family.

It localises to the cytoplasm. In terms of biological role, cross-linked envelope protein of keratinocytes. It is a keratinocyte protein that first appears in the cell cytosol, but ultimately becomes cross-linked to membrane proteins by transglutaminase. All that results in the formation of an insoluble envelope beneath the plasma membrane. The chain is Small proline-rich protein 2E (SPRR2E) from Homo sapiens (Human).